A 282-amino-acid chain; its full sequence is Glycine betaine transport system permease protein OpuAB (282 aa).

Topologically, residues 1 to 18 (MDRLPRIPLADIIDRFVD) are extracellular. Residues 19–39 (WITMTFGGFFDGIANGLAAFV) form a helical membrane-spanning segment. Over 40–44 (NGIVT) the chain is Cytoplasmic. The chain crosses the membrane as a helical span at residues 45-65 (GLGFIPSILLTIIFAALAWWI). The Extracellular portion of the chain corresponds to 66-69 (STRG). The helical transmembrane segment at 70 to 90 (IALFTLIGFLLIDYLGYWDPM) threads the bilayer. The region spanning 90–269 (MLQTLALVLT…IVAITLDRIT (180 aa)) is the ABC transmembrane type-1 domain. The Cytoplasmic portion of the chain corresponds to 91-93 (LQT). Residues 94-114 (LALVLTSVIISIVVGVPIGIW) traverse the membrane as a helical segment. The Extracellular portion of the chain corresponds to 115–137 (ASQKETVRRIVTPILDLMQTMPA). The chain crosses the membrane as a helical span at residues 138–158 (FVYLLPAIFFFNIGVVPGVVA). At 159–215 (SVIFAMPPTIRMTVLGIKQVPADLIEATEAFGSTTAQRLFKVQLPLATKTILAGINQ) the chain is on the cytoplasmic side. The helical transmembrane segment at 216 to 236 (SIMLALSMVVIAAMVGAPGLG) threads the bilayer. Residues 237–242 (SEVYSA) are Extracellular-facing. The helical transmembrane segment at 243-263 (VTQLKTGVGVEAGIAIVIVAI) threads the bilayer. Residues 264–282 (TLDRITQNIKVKKKSRGNA) are Cytoplasmic-facing.

This sequence belongs to the binding-protein-dependent transport system permease family. CysTW subfamily. As to quaternary structure, the complex is composed of two ATP-binding proteins (OpuAA), two transmembrane proteins (OpuAB) and a solute-binding protein (OpuAC).

Its subcellular location is the cell membrane. Functionally, involved in a multicomponent binding-protein-dependent transport system for glycine betaine; probably responsible for the translocation of the substrate across the membrane. The polypeptide is Glycine betaine transport system permease protein OpuAB (opuAB) (Bacillus subtilis (strain 168)).